The following is a 363-amino-acid chain: Protein-arginine kinase (363 aa).

In terms of domain architecture, Phosphagen kinase C-terminal spans 24–254 (IVLSSRIRLA…AQLIEQERSA (231 aa)). Residues 27 to 31 (SSRIR), H92, R125, 176 to 180 (RASVM), and 207 to 212 (RGIYGE) contribute to the ATP site. The RDXXRA motif of the pArg binding pocket involved in allosteric regulation motif lies at 337 to 342 (RDIKRA).

The protein belongs to the ATP:guanido phosphotransferase family.

It carries out the reaction L-arginyl-[protein] + ATP = N(omega)-phospho-L-arginyl-[protein] + ADP + H(+). Appears to be allosterically activated by the binding of pArg-containing polypeptides to the pArg-binding pocket localized in the C-terminal domain of McsB. In terms of biological role, catalyzes the specific phosphorylation of arginine residues in a large number of proteins. Is part of the bacterial stress response system. Protein arginine phosphorylation has a physiologically important role and is involved in the regulation of many critical cellular processes, such as protein homeostasis, motility, competence, and stringent and stress responses, by regulating gene expression and protein activity. This is Protein-arginine kinase from Bacillus pumilus (strain SAFR-032).